We begin with the raw amino-acid sequence, 209 residues long: High frequency lysogenization protein HflD homolog (209 aa).

The protein belongs to the HflD family.

It localises to the cytoplasm. The protein localises to the cell inner membrane. In Proteus mirabilis (strain HI4320), this protein is High frequency lysogenization protein HflD homolog.